We begin with the raw amino-acid sequence, 264 residues long: S-adenosylmethionine decarboxylase proenzyme (264 aa).

Ser-112 serves as the catalytic Schiff-base intermediate with substrate; via pyruvic acid. Position 112 is a pyruvic acid (Ser); by autocatalysis (Ser-112). The active-site Proton acceptor; for processing activity is the His-117. The active-site Proton donor; for catalytic activity is Cys-140.

This sequence belongs to the prokaryotic AdoMetDC family. Type 2 subfamily. As to quaternary structure, heterooctamer of four alpha and four beta chains arranged as a tetramer of alpha/beta heterodimers. Pyruvate is required as a cofactor. In terms of processing, is synthesized initially as an inactive proenzyme. Formation of the active enzyme involves a self-maturation process in which the active site pyruvoyl group is generated from an internal serine residue via an autocatalytic post-translational modification. Two non-identical subunits are generated from the proenzyme in this reaction, and the pyruvate is formed at the N-terminus of the alpha chain, which is derived from the carboxyl end of the proenzyme. The post-translation cleavage follows an unusual pathway, termed non-hydrolytic serinolysis, in which the side chain hydroxyl group of the serine supplies its oxygen atom to form the C-terminus of the beta chain, while the remainder of the serine residue undergoes an oxidative deamination to produce ammonia and the pyruvoyl group blocking the N-terminus of the alpha chain.

The catalysed reaction is S-adenosyl-L-methionine + H(+) = S-adenosyl 3-(methylsulfanyl)propylamine + CO2. It functions in the pathway amine and polyamine biosynthesis; S-adenosylmethioninamine biosynthesis; S-adenosylmethioninamine from S-adenosyl-L-methionine: step 1/1. In terms of biological role, catalyzes the decarboxylation of S-adenosylmethionine to S-adenosylmethioninamine (dcAdoMet), the propylamine donor required for the synthesis of the polyamines spermine and spermidine from the diamine putrescine. The polypeptide is S-adenosylmethionine decarboxylase proenzyme (Klebsiella pneumoniae subsp. pneumoniae (strain ATCC 700721 / MGH 78578)).